A 462-amino-acid chain; its full sequence is Asparagine--tRNA ligase (462 aa).

The protein belongs to the class-II aminoacyl-tRNA synthetase family. As to quaternary structure, homodimer.

The protein localises to the cytoplasm. It carries out the reaction tRNA(Asn) + L-asparagine + ATP = L-asparaginyl-tRNA(Asn) + AMP + diphosphate + H(+). This Borrelia garinii subsp. bavariensis (strain ATCC BAA-2496 / DSM 23469 / PBi) (Borreliella bavariensis) protein is Asparagine--tRNA ligase.